We begin with the raw amino-acid sequence, 381 residues long: Mannitol-1-phosphate 5-dehydrogenase (381 aa).

Residue Ala3 to Gly14 coordinates NAD(+).

Belongs to the mannitol dehydrogenase family.

The enzyme catalyses D-mannitol 1-phosphate + NAD(+) = beta-D-fructose 6-phosphate + NADH + H(+). The chain is Mannitol-1-phosphate 5-dehydrogenase from Exiguobacterium sibiricum (strain DSM 17290 / CCUG 55495 / CIP 109462 / JCM 13490 / 255-15).